A 296-amino-acid chain; its full sequence is Phosphoribosylaminoimidazole-succinocarboxamide synthase (296 aa).

Belongs to the SAICAR synthetase family.

The catalysed reaction is 5-amino-1-(5-phospho-D-ribosyl)imidazole-4-carboxylate + L-aspartate + ATP = (2S)-2-[5-amino-1-(5-phospho-beta-D-ribosyl)imidazole-4-carboxamido]succinate + ADP + phosphate + 2 H(+). Its pathway is purine metabolism; IMP biosynthesis via de novo pathway; 5-amino-1-(5-phospho-D-ribosyl)imidazole-4-carboxamide from 5-amino-1-(5-phospho-D-ribosyl)imidazole-4-carboxylate: step 1/2. The polypeptide is Phosphoribosylaminoimidazole-succinocarboxamide synthase (Syntrophotalea carbinolica (strain DSM 2380 / NBRC 103641 / GraBd1) (Pelobacter carbinolicus)).